A 258-amino-acid chain; its full sequence is UPF0246 protein YaaA (258 aa).

The protein belongs to the UPF0246 family.

This chain is UPF0246 protein YaaA, found in Escherichia coli O17:K52:H18 (strain UMN026 / ExPEC).